The chain runs to 167 residues: Lipoprotein signal peptidase (167 aa).

3 helical membrane passes run 9–29 (AWLY…TKNL), 68–88 (LPLL…YALY), and 98–118 (MGLI…LGMV). Residues aspartate 120 and aspartate 138 contribute to the active site. A helical membrane pass occupies residues 130–150 (YWPAFNIADASISIGIALLIL).

The protein belongs to the peptidase A8 family.

Its subcellular location is the cell inner membrane. The catalysed reaction is Release of signal peptides from bacterial membrane prolipoproteins. Hydrolyzes -Xaa-Yaa-Zaa-|-(S,diacylglyceryl)Cys-, in which Xaa is hydrophobic (preferably Leu), and Yaa (Ala or Ser) and Zaa (Gly or Ala) have small, neutral side chains.. The protein operates within protein modification; lipoprotein biosynthesis (signal peptide cleavage). In terms of biological role, this protein specifically catalyzes the removal of signal peptides from prolipoproteins. The sequence is that of Lipoprotein signal peptidase from Aquifex aeolicus (strain VF5).